A 270-amino-acid polypeptide reads, in one-letter code: Formamidopyrimidine-DNA glycosylase (270 aa).

Catalysis depends on P2, which acts as the Schiff-base intermediate with DNA. E3 serves as the catalytic Proton donor. The active-site Proton donor; for beta-elimination activity is K58. Residues H91, R110, and K151 each coordinate DNA. The segment at 236–270 adopts an FPG-type zinc-finger fold; that stretch reads FVYGRGGEACKVCGTELRNVVLGQRASVFCPRCQR. Residue R260 is the Proton donor; for delta-elimination activity of the active site.

Belongs to the FPG family. Monomer. Zn(2+) serves as cofactor.

The enzyme catalyses Hydrolysis of DNA containing ring-opened 7-methylguanine residues, releasing 2,6-diamino-4-hydroxy-5-(N-methyl)formamidopyrimidine.. The catalysed reaction is 2'-deoxyribonucleotide-(2'-deoxyribose 5'-phosphate)-2'-deoxyribonucleotide-DNA = a 3'-end 2'-deoxyribonucleotide-(2,3-dehydro-2,3-deoxyribose 5'-phosphate)-DNA + a 5'-end 5'-phospho-2'-deoxyribonucleoside-DNA + H(+). Involved in base excision repair of DNA damaged by oxidation or by mutagenic agents. Acts as a DNA glycosylase that recognizes and removes damaged bases. Has a preference for oxidized purines, such as 7,8-dihydro-8-oxoguanine (8-oxoG). Has AP (apurinic/apyrimidinic) lyase activity and introduces nicks in the DNA strand. Cleaves the DNA backbone by beta-delta elimination to generate a single-strand break at the site of the removed base with both 3'- and 5'-phosphates. The polypeptide is Formamidopyrimidine-DNA glycosylase (Pseudomonas fluorescens (strain SBW25)).